Consider the following 144-residue polypeptide: MKLNELMPSEGSRTNRKRIGRGTSSGTGKTAGRGQKGQKARGKVRLGFEGGQMPLYRRIPKRGFTNINRKEFAIVNLDALNVFDEGAEVTPESLLKAGIISKQLSGVKVLGNGEITKKLTVKANKFSESAVKAIEAAGGKTEVI.

Residues Met1 to Val44 are disordered. The segment covering Thr23–Gln35 has biased composition (gly residues).

It belongs to the universal ribosomal protein uL15 family. Part of the 50S ribosomal subunit.

In terms of biological role, binds to the 23S rRNA. The sequence is that of Large ribosomal subunit protein uL15 from Pediococcus pentosaceus (strain ATCC 25745 / CCUG 21536 / LMG 10740 / 183-1w).